The sequence spans 237 residues: Necrosis-inducing protein NPP1 (237 aa).

Residues 1 to 19 (MNVLTFLIAAAVSLAVVQA) form the signal peptide. Asn-67 carries an N-linked (GlcNAc...) asparagine glycan. A Conserved undecapeptide motif motif is present at residues 103–113 (AIMYSWYFPKD). Positions 120-126 (GHRHDWE) match the Conserved heptapetpide motif motif.

Belongs to the Necrosis inducing protein (NPP1) family.

It is found in the secreted. Functionally, secreted effector that acts as a pathogen-associated molecular pattern (PAMP) recognized by the plant immune system. Induces necrotic cell death and ethylene biosynthesis in parsley. Stimulates early induced host cellular responses implicated in elicitor signal transmission such as increased levels of cytoplasmic calcium, production of reactive oxygen species (ROS), and MAP kinase activation. Infiltration of NPP1 into leaves of Arabidopsis thaliana results in transcript accumulation of pathogenesis-related (PR) genes, production of ROS and ethylene, callose apposition, and hypersensitive response (HR)-like cell death. NPP1-mediated induction of the PR1 gene is salicylic acid-dependent, and requires both functional NDR1 and PAD4. The chain is Necrosis-inducing protein NPP1 from Phytophthora nicotianae (Potato buckeye rot agent).